We begin with the raw amino-acid sequence, 566 residues long: Myo-inositol transporter 1A (566 aa).

Residues 1–64 (MSDEKNYGIS…ERTEKLTKFV (64 aa)) are Cytoplasmic-facing. A helical transmembrane segment spans residues 65 to 85 (VGLALFASVSGFCFGFDTGVI). The Extracellular portion of the chain corresponds to 86–106 (SAALVSIKDDFGHILDDTEKE). A helical membrane pass occupies residues 107 to 127 (WISAATSCGALVGALSSGALA). Over 128 to 140 (DRVGRKWTLAVGD) the chain is Cytoplasmic. A helical transmembrane segment spans residues 141–161 (VWFTLGAIIICSSFSVVQMIV). Residues 162–163 (GR) lie on the Extracellular side of the membrane. Residues 164–184 (AVLGLGVGTAAAIAPLYIAEV) traverse the membrane as a helical segment. At 185 to 192 (APTRFRGA) the chain is on the cytoplasmic side. Residues 193–213 (LVTVQSIAITGGQFFSYCIGI) traverse the membrane as a helical segment. Topologically, residues 214 to 222 (PLTGHNGWR) are extracellular. Residues 223-243 (IQFAIGIVPAVVQAAVVHFLP) traverse the membrane as a helical segment. The Cytoplasmic segment spans residues 244–313 (ESPRYDLLRG…VLTEGKYRKP (70 aa)). Residues 314–334 (AITALGIGIFQQLCGFNSLMY) traverse the membrane as a helical segment. The Extracellular segment spans residues 335 to 349 (YAATIFSYAGFDNPT). Residues 350 to 370 (SVGLIVSGTNWFFTFVAMMIL) traverse the membrane as a helical segment. At 371–377 (DRVGKRR) the chain is on the cytoplasmic side. The chain crosses the membrane as a helical span at residues 378–398 (ILLSTYPGMIAGLALASVAFW). The Extracellular segment spans residues 399 to 421 (KMTGSTGHRLVEGTEYPQQWSNM). The chain crosses the membrane as a helical span at residues 422 to 442 (MLGMMVVFIAFYATGSGNITW). The Cytoplasmic portion of the chain corresponds to 443–458 (TVGEMFPLEMRGIGAS). The chain crosses the membrane as a helical span at residues 459 to 479 (ILAGGVWAANIVISATFLTLM). The Extracellular segment spans residues 480 to 485 (NAIGPT). Residues 486–506 (PTFALYAGICLAGLIFIYFCY) form a helical membrane-spanning segment. Residues 507–566 (PEPSGLSLEEIQIIYNYGFGVQKSREIRAEHKLKAQEMRDRANSHIGGSATASDDQLNKV) are Cytoplasmic-facing. The tract at residues 546-566 (DRANSHIGGSATASDDQLNKV) is disordered. Polar residues predominate over residues 556 to 566 (ATASDDQLNKV).

The protein belongs to the major facilitator superfamily. Sugar transporter (TC 2.A.1.1) family.

It is found in the cell membrane. It carries out the reaction myo-inositol(out) + H(+)(out) = myo-inositol(in) + H(+)(in). In terms of biological role, major transporter for myo-inositol. Plays a role in the traversal of the host blood-brain barrier. The chain is Myo-inositol transporter 1A from Cryptococcus neoformans var. grubii serotype A (strain H99 / ATCC 208821 / CBS 10515 / FGSC 9487) (Filobasidiella neoformans var. grubii).